We begin with the raw amino-acid sequence, 198 residues long: Glycerol-3-phosphate acyltransferase (198 aa).

A run of 5 helical transmembrane segments spans residues 6–26, 56–78, 83–101, 113–133, and 155–175; these read FLPVALVIGYLLGSIPFGLVL, LAAGTLLLDALKGTVAVVIAGYI, AAMAAGLGAFLGHLFPVWL, IGILLGLFWPAAVVFCLLWLA, and FLWWFGHLALSALFAVLTLLL.

Belongs to the PlsY family. As to quaternary structure, probably interacts with PlsX.

It localises to the cell inner membrane. The catalysed reaction is an acyl phosphate + sn-glycerol 3-phosphate = a 1-acyl-sn-glycero-3-phosphate + phosphate. Its pathway is lipid metabolism; phospholipid metabolism. Functionally, catalyzes the transfer of an acyl group from acyl-phosphate (acyl-PO(4)) to glycerol-3-phosphate (G3P) to form lysophosphatidic acid (LPA). This enzyme utilizes acyl-phosphate as fatty acyl donor, but not acyl-CoA or acyl-ACP. In Bradyrhizobium diazoefficiens (strain JCM 10833 / BCRC 13528 / IAM 13628 / NBRC 14792 / USDA 110), this protein is Glycerol-3-phosphate acyltransferase.